The chain runs to 61 residues: Potassium channel toxin alpha-KTx 15.6 (61 aa).

Positions 1–23 (MKAFYGMLVIFILCSTCYISVDS) are cleaved as a signal peptide. Residue glutamine 24 is modified to Pyrrolidone carboxylic acid. Cystine bridges form between cysteine 31/cysteine 52, cysteine 37/cysteine 57, and cysteine 41/cysteine 59.

It belongs to the short scorpion toxin superfamily. Potassium channel inhibitor family. Alpha-KTx 15 subfamily. As to expression, expressed by the venom gland.

It is found in the secreted. In terms of biological role, irreversibly blocks the A-type voltage-gated potassium channels in rat cerebellum granular cells (190 nM induce 50% inhibitory effect) (IC(50)=190 nM). Also weakly inhibits Kv1.2/KCNA2 and Kv1.3/KCNA3. The chain is Potassium channel toxin alpha-KTx 15.6 from Tityus discrepans (Venezuelan scorpion).